A 224-amino-acid chain; its full sequence is UPF0758 protein PSHAa2643 (224 aa).

The MPN domain occupies 102-224 (IFNSPNAVYD…CVSFAERGLI (123 aa)). Zn(2+) contacts are provided by His173, His175, and Asp186. Residues 173 to 186 (HNHPSGIAEPSQAD) carry the JAMM motif motif.

It belongs to the UPF0758 family.

This chain is UPF0758 protein PSHAa2643, found in Pseudoalteromonas translucida (strain TAC 125).